The primary structure comprises 239 residues: tRNA (guanine-N(7)-)-methyltransferase (239 aa).

S-adenosyl-L-methionine-binding residues include Glu-69, Glu-94, Asp-121, and Asp-144. Asp-144 is an active-site residue. Lys-148 contacts substrate. An interaction with RNA region spans residues 150 to 155; that stretch reads RHNKRR. Substrate is bound by residues Asp-180 and 217 to 220; that span reads TKFE.

It belongs to the class I-like SAM-binding methyltransferase superfamily. TrmB family. Monomer.

The enzyme catalyses guanosine(46) in tRNA + S-adenosyl-L-methionine = N(7)-methylguanosine(46) in tRNA + S-adenosyl-L-homocysteine. Its pathway is tRNA modification; N(7)-methylguanine-tRNA biosynthesis. Functionally, catalyzes the formation of N(7)-methylguanine at position 46 (m7G46) in tRNA. The polypeptide is tRNA (guanine-N(7)-)-methyltransferase (Yersinia pseudotuberculosis serotype I (strain IP32953)).